The sequence spans 239 residues: Tetraspanin-9 (239 aa).

At 1–13 (MARGCLCCLKYTM) the chain is on the cytoplasmic side. Residues 14–34 (FLFNLIFWLCGCGLLGVGIWL) traverse the membrane as a helical segment. Residues 35–55 (SVSQGNFATFSPSFPSLSAAN) lie on the Extracellular side of the membrane. A helical membrane pass occupies residues 56–76 (LVIAIGTIVMVTGFLGCLGAI). Topologically, residues 77–85 (KENKCLLLS) are cytoplasmic. The helical transmembrane segment at 86-106 (FFIVLLIILLAELILIILFFV) threads the bilayer. Topologically, residues 107–203 (YMDKVNENAK…VKLWFDDNKH (97 aa)) are extracellular. A glycan (N-linked (GlcNAc...) asparagine) is linked at Asn-180. Residues 204–224 (VLGTVGMCILIMQILGMAFSM) form a helical membrane-spanning segment. Residues 225–239 (TLFQHIHRTGKKYDA) are Cytoplasmic-facing.

It belongs to the tetraspanin (TM4SF) family. Found in a complex with GP6. In terms of processing, glycosylated. As to expression, strongly expressed in megakaryocytes, platelets and lung. Weakly expressed in bone marrow, brain and kidney (at protein level).

It is found in the membrane. The protein is Tetraspanin-9 (Tspan9) of Mus musculus (Mouse).